Consider the following 88-residue polypeptide: Putative regulatory protein AM1_5498 (88 aa).

The protein belongs to the RemA family.

This chain is Putative regulatory protein AM1_5498, found in Acaryochloris marina (strain MBIC 11017).